The following is a 518-amino-acid chain: Glucose-1-phosphate adenylyltransferase large subunit 2, cytosolic (518 aa).

Belongs to the bacterial/plant glucose-1-phosphate adenylyltransferase family. As to quaternary structure, heterotetramer composed of two small and two large subunits.

The protein resides in the cytoplasm. It localises to the cytosol. It carries out the reaction alpha-D-glucose 1-phosphate + ATP + H(+) = ADP-alpha-D-glucose + diphosphate. It functions in the pathway glycan biosynthesis; starch biosynthesis. Activated by 3'phosphoglycerate, inhibited by orthophosphate. Allosteric regulation. Inhibited by inorganic phosphate (Pi). Functionally, involved in synthesis of starch. Catalyzes the synthesis of ADP-glucose, a molecule that serves as an activated glycosyl donor for alpha-1,4-glucan synthesis. Essential for starch synthesis in seed endosperm. Is essential for both catalytic and allosteric regulatory properties of the cytosolic heterotetramer enzyme. This chain is Glucose-1-phosphate adenylyltransferase large subunit 2, cytosolic, found in Oryza sativa subsp. japonica (Rice).